The following is a 377-amino-acid chain: Nuclear pore complex protein NUP54 (377 aa).

A compositionally biased stretch (low complexity) spans 1–18 (MFGTPSSSPSFGTPSSTP). Positions 1–104 (MFGTPSSSPS…NTAQQQQQTP (104 aa)) are disordered. Repeat copies occupy residues 2–3 (FG), 11–12 (FG), 20–21 (FG), 27–28 (FG), 36–37 (FG), 49–50 (FG), and 87–88 (FG). Residues 2 to 88 (FGTPSSSPSF…FQQQPSSNFG (87 aa)) form a 7 X 2 AA repeats of F-G region. The segment covering 19-32 (AFGTSSPAFGTPSA) has biased composition (polar residues). A compositionally biased stretch (low complexity) spans 39-104 (PSNPSFSSGG…NTAQQQQQTP (66 aa)).

This sequence belongs to the NUP54 family. In terms of assembly, part of the nuclear pore complex (NPC). The NPC has an eight-fold symmetrical structure comprising a central transport channel and two rings, the cytoplasmic and nuclear rings, to which eight filaments are attached. The cytoplasmic filaments have loose ends, while the nuclear filaments are joined in a distal ring, forming a nuclear basket. NPCs are highly dynamic in configuration and composition, and can be devided in 3 subcomplexes, the NUP62 subcomplex, the NUP107-160 subcomplex and the NUP93 subcomplex, containing approximately 30 different nucleoporin proteins.

The protein localises to the nucleus envelope. It localises to the nucleus. The protein resides in the nuclear pore complex. The polypeptide is Nuclear pore complex protein NUP54 (Arabidopsis thaliana (Mouse-ear cress)).